The chain runs to 1356 residues: Tenascin-R (1356 aa).

An N-terminal signal peptide occupies residues 1–31 (MGIEGETVVLKNMLIGVNLILLGSMLKPSEC). Asn55 carries an N-linked (GlcNAc...) asparagine glycan. Residues 127 to 157 (CASSAQVLQELLSRIEMLEREVSVLRDQCNT) are a coiled coil. O-linked (Xyl...) (chondroitin sulfate) serine glycosylation is present at Ser176. N-linked (GlcNAc...) asparagine glycans are attached at residues Asn180 and Asn198. EGF-like domains lie at 188–199 (CICNEGWFGKNC), 204–230 (CPLGCSSRGVCVDGQCICDSEYSGDDC), and 235–261 (CPTDCSSRGLCVDGECVCEEPYTGEDC). Ser271 is a glycosylation site (O-linked (Xyl...) (chondroitin sulfate) serine). Residue Asn278 is glycosylated (N-linked (GlcNAc...) asparagine). 2 EGF-like domains span residues 281–292 (CLCQEGYAGEDC) and 293–324 (SQRRCLNACSGRGHCQEGLCICEEGYQGPDCS). 2 disulfides stabilise this stretch: Cys297-Cys307 and Cys314-Cys323. Ser302 is a glycosylation site (O-linked (Xyl...) (chondroitin sulfate) serine). Fibronectin type-III domains are found at residues 328–419 (PPED…TPQG), 420–504 (LQFK…TVID), 505–596 (GPTQ…IDAP), 597–686 (KNLR…TELD), 687–776 (SPRD…FRPI), 777–864 (SHLH…TGID), 865–953 (PPKN…AMDS), 954–1040 (PMDL…TLLD), and 1041–1129 (PPAN…GGRV). Asn391, Asn469, and Asn580 each carry an N-linked (GlcNAc...) asparagine glycan. Ser723 is subject to Phosphoserine. N-linked (GlcNAc...) asparagine glycans are attached at residues Asn790, Asn868, Asn873, Asn1034, Asn1044, and Asn1259. Residues 1127-1342 (GRVFSHPQDC…FVEMKMRPYI (216 aa)) form the Fibrinogen C-terminal domain.

Belongs to the tenascin family. As to quaternary structure, forms oligomers. Interacts with TNC and FN1. Interacts with BCAN and ACAN in a calcium -dependent manner. Interacts with CNTN1, SCN2B, PTPRZ1, and CSPG3. Contains N-linked oligosaccharides, O-linked sialylated structures. Contains O-linked chondroitin sulfate glycosaminoglycans. Contains N-linked oligosaccharides with a sulfated carbohydrate structure type GalNAc-4-SO4 or HNK-1 (SO4-3-GlcUABeta1,3GalBeta1,4GlcNAc). The levels of HNK-1 rise and fall in parallel to those of TNR during postnatal development of the cerebellum. In contrast, levels of GalNAc-4-SO4 are regulated independently from those of TNR, rising late in cerebellar development and continuing into adulthood. Early in postnatal development, GalNAc-4-SO4 is found predominantly on isoform 1, whereas in the adult it is predominantly on isoform 2. Brain-specific. Expressed in oligodendrocytes and small subsets of neurons (mainly interneurons and motoneurons) of the cerebellum, hippocampus and olfactory bulb. Expressed in dorsal root ganglia.

It is found in the secreted. The protein resides in the extracellular space. It localises to the extracellular matrix. Its function is as follows. Neural extracellular matrix (ECM) protein involved in interactions with different cells and matrix components. Theses interactions can influence cellular behavior by either evoking a stable adhesion and differentiation, or repulsion and inhibition of neurite growth. Binding to cell surface gangliosides inhibits RGD-dependent integrin-mediated cell adhesion and results in an inhibition of PTK2/FAK1 (FAK) phosphorylation and cell detachment. Binding to membrane surface sulfatides results in a oligodendrocyte adhesion and differentiation. Interaction with CNTN1 induces a repulsion of neurons and an inhibition of neurite outgrowth. Interacts with SCN2B may play a crucial role in clustering and regulation of activity of sodium channels at nodes of Ranvier. TNR-linked chondroitin sulfate glycosaminoglycans are involved in the interaction with FN1 and mediates inhibition of cell adhesion and neurite outgrowth. The highly regulated addition of sulfated carbohydrate structure may modulate the adhesive properties of TNR over the course of development and during synapse maintenance. This is Tenascin-R (Tnr) from Rattus norvegicus (Rat).